We begin with the raw amino-acid sequence, 588 residues long: Transport ATP-binding protein AarD (588 aa).

Residues 24 to 316 (LRISMLLGVV…LGTYYHAKAQ (293 aa)) enclose the ABC transmembrane type-1 domain. 6 helical membrane passes run 29–49 (LLGV…AVIL), 62–82 (LLTP…LTVI), 149–169 (IIPI…ALIL), 170–190 (FATA…AADA), 250–270 (SGVL…YFGF), and 276–296 (LNFG…ALIL). Residues 350–583 (IEANKLEIYS…EGPFARLLAH (234 aa)) enclose the ABC transporter domain. 383–390 (GQSGAGKS) is an ATP binding site.

Belongs to the ABC transporter superfamily.

It localises to the cell inner membrane. In terms of biological role, somehow involved in the cytochrome D branch of aerobic respiration. Seems to be a component of a transport system. This chain is Transport ATP-binding protein AarD (aarD), found in Providencia stuartii.